We begin with the raw amino-acid sequence, 162 residues long: Calcium-binding protein 4b (162 aa).

EF-hand domains lie at 10-45, 46-81, 85-120, and 123-158; these read ELTNATNEAIKAADKNGDNQLSKKEVNDMYKKCKYP, NPTLATNSLFELFDLDKDGKLSVNEVKTAVLVDYII, TCLKKFVDIIFKADSNKDNKITWDEARQYFITSGSN, and QAKVLANSMFEDVDSDDDKCITREELREYAIEYFEI. 10 residues coordinate Ca(2+): D23, N25, D27, Q29, E34, D59, D61, D63, K65, and E70. Ca(2+) is bound by residues D136, D138, D140, C142, and E147.

In Dictyostelium discoideum (Social amoeba), this protein is Calcium-binding protein 4b (cbpD2).